Reading from the N-terminus, the 192-residue chain is Cytidylate kinase (192 aa).

Residue 7 to 15 coordinates ATP; the sequence is GPPGSGKST.

This sequence belongs to the cytidylate kinase family. Type 2 subfamily.

The protein resides in the cytoplasm. The enzyme catalyses CMP + ATP = CDP + ADP. It carries out the reaction dCMP + ATP = dCDP + ADP. The protein is Cytidylate kinase of Halorubrum lacusprofundi (strain ATCC 49239 / DSM 5036 / JCM 8891 / ACAM 34).